The following is a 214-amino-acid chain: NADH-quinone oxidoreductase subunit C (214 aa).

The protein belongs to the complex I 30 kDa subunit family. In terms of assembly, NDH-1 is composed of 14 different subunits. Subunits NuoB, C, D, E, F, and G constitute the peripheral sector of the complex.

The protein resides in the cell inner membrane. It catalyses the reaction a quinone + NADH + 5 H(+)(in) = a quinol + NAD(+) + 4 H(+)(out). Functionally, NDH-1 shuttles electrons from NADH, via FMN and iron-sulfur (Fe-S) centers, to quinones in the respiratory chain. The immediate electron acceptor for the enzyme in this species is believed to be ubiquinone. Couples the redox reaction to proton translocation (for every two electrons transferred, four hydrogen ions are translocated across the cytoplasmic membrane), and thus conserves the redox energy in a proton gradient. The protein is NADH-quinone oxidoreductase subunit C of Caulobacter sp. (strain K31).